Reading from the N-terminus, the 208-residue chain is 3-isopropylmalate dehydratase small subunit 2 (208 aa).

The protein belongs to the LeuD family. LeuD type 1 subfamily. As to quaternary structure, heterodimer of LeuC and LeuD.

It catalyses the reaction (2R,3S)-3-isopropylmalate = (2S)-2-isopropylmalate. It participates in amino-acid biosynthesis; L-leucine biosynthesis; L-leucine from 3-methyl-2-oxobutanoate: step 2/4. Functionally, catalyzes the isomerization between 2-isopropylmalate and 3-isopropylmalate, via the formation of 2-isopropylmaleate. The polypeptide is 3-isopropylmalate dehydratase small subunit 2 (Salmonella choleraesuis (strain SC-B67)).